The chain runs to 428 residues: 3-phosphoshikimate 1-carboxyvinyltransferase (428 aa).

3 residues coordinate 3-phosphoshikimate: Lys-22, Ser-23, and Arg-27. Residue Lys-22 coordinates phosphoenolpyruvate. Positions 96 and 124 each coordinate phosphoenolpyruvate. Residues Ser-170, Ser-171, Gln-172, Ser-198, Asp-314, Asn-337, and Lys-341 each contribute to the 3-phosphoshikimate site. Phosphoenolpyruvate is bound at residue Gln-172. Asp-314 serves as the catalytic Proton acceptor. Phosphoenolpyruvate contacts are provided by Arg-345, Arg-387, and Lys-412.

The protein belongs to the EPSP synthase family. Monomer.

Its subcellular location is the cytoplasm. The enzyme catalyses 3-phosphoshikimate + phosphoenolpyruvate = 5-O-(1-carboxyvinyl)-3-phosphoshikimate + phosphate. The protein operates within metabolic intermediate biosynthesis; chorismate biosynthesis; chorismate from D-erythrose 4-phosphate and phosphoenolpyruvate: step 6/7. In terms of biological role, catalyzes the transfer of the enolpyruvyl moiety of phosphoenolpyruvate (PEP) to the 5-hydroxyl of shikimate-3-phosphate (S3P) to produce enolpyruvyl shikimate-3-phosphate and inorganic phosphate. This Shewanella amazonensis (strain ATCC BAA-1098 / SB2B) protein is 3-phosphoshikimate 1-carboxyvinyltransferase.